The sequence spans 140 residues: Putative pre-16S rRNA nuclease (140 aa).

It belongs to the YqgF nuclease family.

It is found in the cytoplasm. Functionally, could be a nuclease involved in processing of the 5'-end of pre-16S rRNA. The protein is Putative pre-16S rRNA nuclease of Endomicrobium trichonymphae.